A 162-amino-acid chain; its full sequence is 18.5 kDa class IV heat shock protein (162 aa).

The 97-residue stretch at 53-149 (TSSSTVNTQL…PPQLPEIEEN (97 aa)) folds into the sHSP domain.

The protein belongs to the small heat shock protein (HSP20) family. May form oligomeric structures.

The protein resides in the cytoplasm. The polypeptide is 18.5 kDa class IV heat shock protein (HSP18.5) (Arabidopsis thaliana (Mouse-ear cress)).